We begin with the raw amino-acid sequence, 165 residues long: Chorismate pyruvate-lyase (165 aa).

Residues Met-35, Arg-77, Leu-115, and Glu-156 each coordinate substrate.

The protein belongs to the UbiC family. Monomer.

Its subcellular location is the cytoplasm. It carries out the reaction chorismate = 4-hydroxybenzoate + pyruvate. It functions in the pathway cofactor biosynthesis; ubiquinone biosynthesis. Its function is as follows. Removes the pyruvyl group from chorismate, with concomitant aromatization of the ring, to provide 4-hydroxybenzoate (4HB) for the ubiquinone pathway. This is Chorismate pyruvate-lyase from Shigella dysenteriae serotype 1 (strain Sd197).